We begin with the raw amino-acid sequence, 125 residues long: MGVMWGLISVAIASLAQLSLGFAMMRLPSIAHPLAFISGLGALNAATLALFAGLAGYLVSVFCWHKTLHTLALSKAYALLSLSYVLVWVASMLLPGLQGAFSLKAMLGVLCIMAGVMLIFLPARS.

At 1 to 2 (MG) the chain is on the cytoplasmic side. The chain crosses the membrane as a helical span at residues 3 to 23 (VMWGLISVAIASLAQLSLGFA). The Periplasmic segment spans residues 24–33 (MMRLPSIAHP). A helical transmembrane segment spans residues 34–54 (LAFISGLGALNAATLALFAGL). Over 55–76 (AGYLVSVFCWHKTLHTLALSKA) the chain is Cytoplasmic. Residues 77–97 (YALLSLSYVLVWVASMLLPGL) form a helical membrane-spanning segment. Residues 98 to 100 (QGA) lie on the Periplasmic side of the membrane. The chain crosses the membrane as a helical span at residues 101 to 121 (FSLKAMLGVLCIMAGVMLIFL). Residues 122–125 (PARS) lie on the Cytoplasmic side of the membrane.

The protein belongs to the ArnF family. Heterodimer of ArnE and ArnF.

It is found in the cell inner membrane. It functions in the pathway bacterial outer membrane biogenesis; lipopolysaccharide biosynthesis. In terms of biological role, translocates 4-amino-4-deoxy-L-arabinose-phosphoundecaprenol (alpha-L-Ara4N-phosphoundecaprenol) from the cytoplasmic to the periplasmic side of the inner membrane. In Salmonella agona (strain SL483), this protein is Probable 4-amino-4-deoxy-L-arabinose-phosphoundecaprenol flippase subunit ArnF.